The sequence spans 374 residues: Putative heme chaperone HemW-like protein (374 aa).

Residues 1 to 231 form the Radical SAM core domain; sequence MKLLGLYINI…EKLLKKSGYK (231 aa).

Belongs to the anaerobic coproporphyrinogen-III oxidase family. HemW subfamily.

Its subcellular location is the cytoplasm. Might be a heme chaperone; in E.coli heme binds independently of binding to [4Fe-4S] or S-adenosyl-L-methionine. This Buchnera aphidicola subsp. Baizongia pistaciae (strain Bp) protein is Putative heme chaperone HemW-like protein.